The primary structure comprises 196 residues: ATP-dependent Clp protease proteolytic subunit (196 aa).

Ser-101 (nucleophile) is an active-site residue. The active site involves His-126.

This sequence belongs to the peptidase S14 family. Component of the chloroplastic Clp protease core complex.

Its subcellular location is the plastid. The protein localises to the chloroplast stroma. It carries out the reaction Hydrolysis of proteins to small peptides in the presence of ATP and magnesium. alpha-casein is the usual test substrate. In the absence of ATP, only oligopeptides shorter than five residues are hydrolyzed (such as succinyl-Leu-Tyr-|-NHMec, and Leu-Tyr-Leu-|-Tyr-Trp, in which cleavage of the -Tyr-|-Leu- and -Tyr-|-Trp bonds also occurs).. In terms of biological role, cleaves peptides in various proteins in a process that requires ATP hydrolysis. Has a chymotrypsin-like activity. Plays a major role in the degradation of misfolded proteins. This is ATP-dependent Clp protease proteolytic subunit from Panax ginseng (Korean ginseng).